The chain runs to 223 residues: Golgi to ER traffic protein 1 (223 aa).

A topological domain (lumenal) is located at residue M1. Residues 2-21 (SWVVAIAVVFVVVLKVLEYS) form a helical membrane-spanning segment. Topologically, residues 22 to 105 (TSYHDLVLQS…QIKGHLKKVK (84 aa)) are cytoplasmic. Residues 56-105 (ENKSISAQDNYAKWTKNNRKLDKLDKEITELGAQLKAHNEQIKGHLKKVK) are a coiled coil. A helical membrane pass occupies residues 106–126 (LLLLTVPFLCFKLWKGKHIVY). The Lumenal segment spans residues 127–177 (NLPHHQMFPQLVAGVWSQGWLYLAILPLQLAKSIVTGSSFAIETASFPHMG). A helical transmembrane segment spans residues 178–194 (VSLGIWLWALNSVISNI). Residues 195–223 (EFMTMQLWAKPVSKPSKKLEIVTDEIKVD) lie on the Cytoplasmic side of the membrane.

This sequence belongs to the WRB/GET1 family. As to quaternary structure, component of the Golgi to ER traffic (GET) complex, which is composed of GET1, GET2 and GET3. Within the complex, GET1 and GET2 form a heterotetramer which is stabilized by phosphatidylinositol binding and which binds to the GET3 homodimer.

It is found in the endoplasmic reticulum membrane. The protein localises to the golgi apparatus membrane. In terms of biological role, required for the post-translational delivery of tail-anchored (TA) proteins to the endoplasmic reticulum. Together with GET2, acts as a membrane receptor for soluble GET3, which recognizes and selectively binds the transmembrane domain of TA proteins in the cytosol. The GET complex cooperates with the HDEL receptor ERD2 to mediate the ATP-dependent retrieval of resident ER proteins that contain a C-terminal H-D-E-L retention signal from the Golgi to the ER. The protein is Golgi to ER traffic protein 1 of Candida glabrata (strain ATCC 2001 / BCRC 20586 / JCM 3761 / NBRC 0622 / NRRL Y-65 / CBS 138) (Yeast).